Here is a 315-residue protein sequence, read N- to C-terminus: Thioredoxin reductase (315 aa).

45 to 52 (EGNTPGGK) provides a ligand contact to FAD. An intrachain disulfide couples Cys-145 to Cys-148. Residue 288–297 (DCRSKSFRQI) coordinates FAD.

It belongs to the class-II pyridine nucleotide-disulfide oxidoreductase family. In terms of assembly, homodimer. FAD serves as cofactor.

The protein localises to the cytoplasm. The enzyme catalyses [thioredoxin]-dithiol + NADP(+) = [thioredoxin]-disulfide + NADPH + H(+). The sequence is that of Thioredoxin reductase (trxB) from Mycoplasma genitalium (strain ATCC 33530 / DSM 19775 / NCTC 10195 / G37) (Mycoplasmoides genitalium).